Reading from the N-terminus, the 312-residue chain is MAMGSASCISLVVLVALATAASGQLSSTFYDTSCPRALVAIKSGVAAAVSSDPRMGASLLRLHFHDCFGCDASVLLTGMEQNAGPNVGSLRGFGVIDNIKTQLESVCKQTVSCADILTVAARDSVVALGGPSWTVPLGRRDSTTASASLANSDLPGPSSSRSQLEAAFLKKNLNTVDMVALSGAHTIGKAQCSNFRTRIYGGDTNINTAFATSLKANCPQSGGNTNLANLDTMTPNAFDNAYYTNLLSQKGLLHSDQVLFNNETTDNTVRNFASNAAAFSSAFTTAMIKMGNIAPLTGTQGQIRLSCSKVNS.

A signal peptide spans 1–23; it reads MAMGSASCISLVVLVALATAASG. Glutamine 24 carries the pyrrolidone carboxylic acid modification. 4 cysteine pairs are disulfide-bonded: cysteine 34–cysteine 107, cysteine 67–cysteine 70, cysteine 113–cysteine 307, and cysteine 192–cysteine 218. Histidine 65 serves as the catalytic Proton acceptor. Ca(2+) contacts are provided by aspartate 66, glycine 69, aspartate 71, and serine 73. Residue proline 155 participates in substrate binding. Histidine 185 contributes to the heme b binding site. Threonine 186 is a binding site for Ca(2+). Residues aspartate 231, threonine 234, and aspartate 239 each contribute to the Ca(2+) site. Asparagine 262 carries an N-linked (GlcNAc...) asparagine glycan.

The protein belongs to the peroxidase family. Classical plant (class III) peroxidase subfamily. Ca(2+) is required as a cofactor. Heme b serves as cofactor. As to expression, root.

The protein resides in the secreted. It catalyses the reaction 2 a phenolic donor + H2O2 = 2 a phenolic radical donor + 2 H2O. In terms of biological role, removal of H(2)O(2), oxidation of toxic reductants, biosynthesis and degradation of lignin, suberization, auxin catabolism, response to environmental stresses such as wounding, pathogen attack and oxidative stress. These functions might be dependent on each isozyme/isoform in each plant tissue. Involved in defense response to powdery meldew fungus. This is Peroxidase from Triticum aestivum (Wheat).